The sequence spans 642 residues: Rhotekin-2 (642 aa).

An REM-1 domain is found at Ile30–Phe105. The region spanning Leu306–Tyr413 is the PH domain. Disordered stretches follow at residues Thr505–Ser563 and Leu575–Trp642. Basic and acidic residues-rich tracts occupy residues Pro597–Ile615 and Ser632–Trp642.

This Danio rerio (Zebrafish) protein is Rhotekin-2 (rtkn2).